Here is a 340-residue protein sequence, read N- to C-terminus: Ketol-acid reductoisomerase (NADP(+)) (340 aa).

In terms of domain architecture, KARI N-terminal Rossmann spans 2 to 181 (VKMYYEADVK…GCTKAGVIET (180 aa)). NADP(+) is bound by residues 25–28 (YGSQ), R48, S52, and 82–85 (DERQ). H107 is a catalytic residue. NADP(+) is bound at residue G133. One can recognise a KARI C-terminal knotted domain in the interval 182–327 (SFREETETDL…EQLRGMMSWI (146 aa)). 4 residues coordinate Mg(2+): D190, E194, E226, and E230. Position 251 (S251) interacts with substrate.

It belongs to the ketol-acid reductoisomerase family. The cofactor is Mg(2+).

The enzyme catalyses (2R)-2,3-dihydroxy-3-methylbutanoate + NADP(+) = (2S)-2-acetolactate + NADPH + H(+). It carries out the reaction (2R,3R)-2,3-dihydroxy-3-methylpentanoate + NADP(+) = (S)-2-ethyl-2-hydroxy-3-oxobutanoate + NADPH + H(+). It functions in the pathway amino-acid biosynthesis; L-isoleucine biosynthesis; L-isoleucine from 2-oxobutanoate: step 2/4. It participates in amino-acid biosynthesis; L-valine biosynthesis; L-valine from pyruvate: step 2/4. Involved in the biosynthesis of branched-chain amino acids (BCAA). Catalyzes an alkyl-migration followed by a ketol-acid reduction of (S)-2-acetolactate (S2AL) to yield (R)-2,3-dihydroxy-isovalerate. In the isomerase reaction, S2AL is rearranged via a Mg-dependent methyl migration to produce 3-hydroxy-3-methyl-2-ketobutyrate (HMKB). In the reductase reaction, this 2-ketoacid undergoes a metal-dependent reduction by NADPH to yield (R)-2,3-dihydroxy-isovalerate. This chain is Ketol-acid reductoisomerase (NADP(+)), found in Brevibacillus brevis (strain 47 / JCM 6285 / NBRC 100599).